The following is a 1123-amino-acid chain: Alpha-mannosidase E (1123 aa).

The first 21 residues, 1 to 21 (MNKTKLIKIIFVIGVWILLST), serve as a signal peptide directing secretion. 2 N-linked (GlcNAc...) asparagine glycosylation sites follow: Asn-2 and Asn-38. At 22–1072 (FIINIYNENF…KYNRPNHLAL (1051 aa)) the chain is on the extracellular side. Zn(2+) is bound by residues His-67 and Asp-69. N-linked (GlcNAc...) asparagine glycosylation occurs at Asn-140. 2 residues coordinate Zn(2+): Asp-150 and His-409. Asp-150 serves as the catalytic Nucleophile. N-linked (GlcNAc...) asparagine glycans are attached at residues Asn-521, Asn-675, Asn-858, Asn-887, Asn-975, and Asn-990. The helical transmembrane segment at 1073-1093 (ILSLSIGTPAGILIIVIALVV) threads the bilayer. Residues 1094 to 1123 (IYKKRKNRKTLTSSYSLLNLILKDRADSSP) lie on the Cytoplasmic side of the membrane.

Belongs to the glycosyl hydrolase 38 family. Zn(2+) is required as a cofactor.

The protein localises to the membrane. The enzyme catalyses Hydrolysis of terminal, non-reducing alpha-D-mannose residues in alpha-D-mannosides.. This Dictyostelium discoideum (Social amoeba) protein is Alpha-mannosidase E (manE).